The following is a 283-amino-acid chain: Bifunctional protein FolD (283 aa).

NADP(+) is bound by residues 166 to 168 (GQS), S191, and I232.

It belongs to the tetrahydrofolate dehydrogenase/cyclohydrolase family. As to quaternary structure, homodimer.

It catalyses the reaction (6R)-5,10-methylene-5,6,7,8-tetrahydrofolate + NADP(+) = (6R)-5,10-methenyltetrahydrofolate + NADPH. The enzyme catalyses (6R)-5,10-methenyltetrahydrofolate + H2O = (6R)-10-formyltetrahydrofolate + H(+). It functions in the pathway one-carbon metabolism; tetrahydrofolate interconversion. Catalyzes the oxidation of 5,10-methylenetetrahydrofolate to 5,10-methenyltetrahydrofolate and then the hydrolysis of 5,10-methenyltetrahydrofolate to 10-formyltetrahydrofolate. The chain is Bifunctional protein FolD from Laribacter hongkongensis (strain HLHK9).